The following is a 126-amino-acid chain: Holo-[acyl-carrier-protein] synthase (126 aa).

Aspartate 9 and glutamate 58 together coordinate Mg(2+).

This sequence belongs to the P-Pant transferase superfamily. AcpS family. Mg(2+) serves as cofactor.

It is found in the cytoplasm. It carries out the reaction apo-[ACP] + CoA = holo-[ACP] + adenosine 3',5'-bisphosphate + H(+). Its function is as follows. Transfers the 4'-phosphopantetheine moiety from coenzyme A to a Ser of acyl-carrier-protein. The polypeptide is Holo-[acyl-carrier-protein] synthase (Escherichia coli (strain ATCC 8739 / DSM 1576 / NBRC 3972 / NCIMB 8545 / WDCM 00012 / Crooks)).